The primary structure comprises 320 residues: D-alanine--D-alanine ligase (320 aa).

Residues Lys101–Ser317 form the ATP-grasp domain. Ile148–Thr203 contacts ATP. Asp271, Glu284, and Asn286 together coordinate Mg(2+).

It belongs to the D-alanine--D-alanine ligase family. Requires Mg(2+) as cofactor. Mn(2+) is required as a cofactor.

The protein localises to the cytoplasm. It catalyses the reaction 2 D-alanine + ATP = D-alanyl-D-alanine + ADP + phosphate + H(+). It participates in cell wall biogenesis; peptidoglycan biosynthesis. Functionally, cell wall formation. This chain is D-alanine--D-alanine ligase, found in Hamiltonella defensa subsp. Acyrthosiphon pisum (strain 5AT).